Consider the following 494-residue polypeptide: Alpha-amylase-related protein (494 aa).

Residues 1 to 20 (MIKFALALTLCLAGASLSLA) form the signal peptide. Gln21 is subject to Pyrrolidone carboxylic acid. Cys48 and Cys104 form a disulfide bridge. Ca(2+) is bound by residues Asn118, Gln169, and Asp178. Residues Cys157 and Cys171 are joined by a disulfide bond. Arg206 provides a ligand contact to chloride. Asp208 serves as the catalytic Nucleophile. His212 contacts Ca(2+). The active-site Proton donor is the Glu245. Positions 308 and 343 each coordinate chloride. Intrachain disulfides connect Cys376–Cys382, Cys418–Cys441, and Cys448–Cys460.

This sequence belongs to the glycosyl hydrolase 13 family. As to quaternary structure, monomer. Ca(2+) is required as a cofactor. Chloride serves as cofactor.

It is found in the secreted. The catalysed reaction is Endohydrolysis of (1-&gt;4)-alpha-D-glucosidic linkages in polysaccharides containing three or more (1-&gt;4)-alpha-linked D-glucose units.. This is Alpha-amylase-related protein (Amyrel) from Drosophila jambulina (Fruit fly).